A 963-amino-acid chain; its full sequence is Exportin-T (963 aa).

Met-1 carries the N-acetylmethionine modification. An N6-acetyllysine modification is found at Lys-635.

The protein belongs to the exportin family. In terms of assembly, found in a complex with XPOT, Ran and tRNA. Probably found in a complex with nucleoporins. Interacts with Ran and tRNA in a GTP-dependent manner.

The protein localises to the nucleus. The protein resides in the cytoplasm. In terms of biological role, mediates the nuclear export of aminoacylated tRNAs. In the nucleus binds to tRNA and to the GTPase Ran in its active GTP-bound form. Docking of this trimeric complex to the nuclear pore complex (NPC) is mediated through binding to nucleoporins. Upon transit of a nuclear export complex into the cytoplasm, disassembling of the complex and hydrolysis of Ran-GTP to Ran-GDP (induced by RANBP1 and RANGAP1, respectively) cause release of the tRNA from the export receptor. XPOT then return to the nuclear compartment and mediate another round of transport. The directionality of nuclear export is thought to be conferred by an asymmetric distribution of the GTP- and GDP-bound forms of Ran between the cytoplasm and nucleus. The protein is Exportin-T (Xpot) of Mus musculus (Mouse).